The primary structure comprises 194 residues: MFGYRSNVPKVRLTTDRLVVRLVHDRDAWRLADYYAENRHFLKPWEPVRDESHCYPSGWQARLGMINEFHKQGSAFYFGLFDPDEKEIIGVANFSNVVRGSFHACYLGYSIGQKWQGKGLMFEALTAAIRYMQRTQHIHRIMANYMPHNKRSGDLLARLGFEKEGYAKDYLLIDGQWRDHVLTALTTPDWTPGR.

Positions 18–188 (LVVRLVHDRD…DHVLTALTTP (171 aa)) constitute an N-acetyltransferase domain.

It belongs to the acetyltransferase family. RimJ subfamily.

Its subcellular location is the cytoplasm. It catalyses the reaction N-terminal L-alanyl-[ribosomal protein uS5] + acetyl-CoA = N-terminal N(alpha)-acetyl-L-alanyl-[ribosomal protein uS5] + CoA + H(+). Acetylates the N-terminal alanine of ribosomal protein uS5. This is [Ribosomal protein uS5]-alanine N-acetyltransferase (rimJ) from Shigella flexneri.